The chain runs to 147 residues: Antiholin-like protein LrgA (147 aa).

Helical transmembrane passes span 12–32, 35–55, 74–94, and 98–118; these read PAHF…SKII, FMPI…VLLC, NIGL…GVIS, and FLII…TGYV.

The protein belongs to the CidA/LrgA family. LrgA subfamily.

It is found in the cell membrane. Functionally, inhibits the expression or activity of extracellular murein hydrolases by interacting, possibly with LrgB, with the holin-like proteins CidA and/or CidB. The LrgAB and CidAB proteins may affect the proton motive force of the membrane. May be involved in programmed cell death (PCD), possibly triggering PCD in response to antibiotics and environmental stresses. In Staphylococcus aureus (strain MSSA476), this protein is Antiholin-like protein LrgA.